The primary structure comprises 268 residues: Indole-3-glycerol phosphate synthase (268 aa).

Belongs to the TrpC family.

It catalyses the reaction 1-(2-carboxyphenylamino)-1-deoxy-D-ribulose 5-phosphate + H(+) = (1S,2R)-1-C-(indol-3-yl)glycerol 3-phosphate + CO2 + H2O. The protein operates within amino-acid biosynthesis; L-tryptophan biosynthesis; L-tryptophan from chorismate: step 4/5. In Acinetobacter baylyi (strain ATCC 33305 / BD413 / ADP1), this protein is Indole-3-glycerol phosphate synthase (trpC).